A 1663-amino-acid chain; its full sequence is Cortactin-binding protein 2 (1663 aa).

Disordered stretches follow at residues 1–26 (MATDGASCEPDFSRAPEDAAGATAEA), 203–225 (KKKTSALEEELSTEKRRSTDMEA), 359–440 (QASH…LHPG), 454–478 (GNANDPDQNGNTTQSPPSRDVSPTS), and 497–615 (SRFT…PPKP). Residues 119–276 (RKMQERMSTQ…EQLKRGSDSK (158 aa)) are a coiled coil. Composition is skewed to polar residues over residues 385-396 (GPSTDSAPDLTN) and 418-435 (QSHSQAPLHSLHSPSANA). At Arg-498 the chain carries Asymmetric dimethylarginine. Over residues 606–615 (PTTPQLPPKP) the composition is skewed to pro residues. 6 ANK repeats span residues 709-739 (GRPTLLQQAAAQGNVTLLSMLLNEEGLDINY), 743-772 (DGHSALYSAAKNGHTDCVRLLLNAEAQVDA), 776-805 (NGFTPLCAAAAQGHFKCVELLTAYDADINH), 809-838 (GGQTPLYLACKNGNKECIKLLLEAGSDRSV), 842-871 (DGWTPLHAAVDTGNVDSVKLLMYHSAPARG), and 912-942 (EGWTAAHIAASKGFKNCLEILCRHAGLEPDR). The segment at 1449-1490 (KGENGTWRKVSTSPRKKSGHFSSPTWNKPDLNEEGIRNTTTS) is disordered. Residue Ser-1524 is modified to Phosphoserine. The segment at 1579–1663 (VSEKEVSPLS…KNEQVEKPNK (85 aa)) is disordered. Polar residues predominate over residues 1586–1595 (PLSSHQTTEC). Low complexity predominate over residues 1624-1638 (SQNTKRSSSSSNTRQ). The segment covering 1645–1663 (SKEEIWNLHKNEQVEKPNK) has biased composition (basic and acidic residues).

In terms of assembly, interacts with CTTN/cortactin SH3 domain. Interacts with STRN, STRN4/zinedin and MOB4/phocein; this interactions mediate the association with the STRIPAK core complex and may regulate dendritic spine distribution of the STRIPAK complex in hippocampal neurons. Activation of glutamate receptors weakens the interaction with STRN and STRN4.

The protein localises to the cytoplasm. It is found in the cell cortex. Its subcellular location is the cell projection. The protein resides in the dendritic spine. Functionally, regulates the dendritic spine distribution of CTTN/cortactin in hippocampal neurons, and thus controls dendritic spinogenesis and dendritic spine maintenance. Associates with the striatin-interacting phosphatase and kinase (STRIPAK) core complex to regulate dendritic spine distribution of the STRIPAK complex in hippocampal neurons. The protein is Cortactin-binding protein 2 (CTTNBP2) of Rhinolophus ferrumequinum (Greater horseshoe bat).